Consider the following 604-residue polypeptide: Membrane protein insertase YidC (604 aa).

The chain crosses the membrane as a helical span at residues 8–28 (LYLAIGLSLLVLIGWNYFFAG). Positions 42–84 (EQQAQTQTTSDTTARSDLNVPGQRSLPGESPQTQLSRPEALAA) are disordered. The segment covering 43-58 (QQAQTQTTSDTTARSD) has biased composition (low complexity). Transmembrane regions (helical) follow at residues 349-369 (FDLLIDWGYFYFITRPMFWIL), 375-395 (VVGNFGVAILCITVLVKAVFF), 449-469 (LPMLIQIPVFFALYKVLFVTI), 507-527 (MIGHFLAIGIWPLIMGVSMFF), and 546-566 (WMPVIFTFMLGTFPSGLVIYW).

This sequence belongs to the OXA1/ALB3/YidC family. Type 1 subfamily. In terms of assembly, interacts with the Sec translocase complex via SecD. Specifically interacts with transmembrane segments of nascent integral membrane proteins during membrane integration.

It is found in the cell inner membrane. Functionally, required for the insertion and/or proper folding and/or complex formation of integral membrane proteins into the membrane. Involved in integration of membrane proteins that insert both dependently and independently of the Sec translocase complex, as well as at least some lipoproteins. Aids folding of multispanning membrane proteins. This Beijerinckia indica subsp. indica (strain ATCC 9039 / DSM 1715 / NCIMB 8712) protein is Membrane protein insertase YidC.